Here is a 490-residue protein sequence, read N- to C-terminus: Probable cytosol aminopeptidase (490 aa).

The Mn(2+) site is built by lysine 258 and aspartate 263. The active site involves lysine 270. Mn(2+)-binding residues include aspartate 282, aspartate 341, and glutamate 343. Residue arginine 345 is part of the active site.

It belongs to the peptidase M17 family. Mn(2+) serves as cofactor.

Its subcellular location is the cytoplasm. The enzyme catalyses Release of an N-terminal amino acid, Xaa-|-Yaa-, in which Xaa is preferably Leu, but may be other amino acids including Pro although not Arg or Lys, and Yaa may be Pro. Amino acid amides and methyl esters are also readily hydrolyzed, but rates on arylamides are exceedingly low.. It carries out the reaction Release of an N-terminal amino acid, preferentially leucine, but not glutamic or aspartic acids.. Its function is as follows. Presumably involved in the processing and regular turnover of intracellular proteins. Catalyzes the removal of unsubstituted N-terminal amino acids from various peptides. This chain is Probable cytosol aminopeptidase, found in Microcystis aeruginosa (strain NIES-843 / IAM M-2473).